The sequence spans 177 residues: Thymidine kinase (177 aa).

ATP is bound at residue 11–18; sequence GPMLSGKS. E83 functions as the Proton acceptor in the catalytic mechanism. Residue F113 participates in substrate binding. Residues C138 and C141 each contribute to the Zn(2+) site. 157 to 161 lines the substrate pocket; the sequence is IEIIG. Residues C170 and C173 each contribute to the Zn(2+) site.

This sequence belongs to the thymidine kinase family. In terms of assembly, homotetramer. Two molecules of substrate bind to each enzyme tetramer.

The enzyme catalyses thymidine + ATP = dTMP + ADP + H(+). Functionally, phosphorylates thymidine and thymidine analogs, such as azidothymidine (AZT). Part of the salvage pathway for pyrimidine deoxyribonucleotide synthesis. The chain is Thymidine kinase (OPG101) from Monkeypox virus (strain Zaire-96-I-16) (MPX).